Consider the following 251-residue polypeptide: Large ribosomal subunit protein uL3 (251 aa).

Disordered stretches follow at residues Ser140–Met162 and Ala229–Ala251. Gln151 carries the N5-methylglutamine modification.

Belongs to the universal ribosomal protein uL3 family. In terms of assembly, part of the 50S ribosomal subunit. Forms a cluster with proteins L14 and L19. In terms of processing, methylated by PrmB.

One of the primary rRNA binding proteins, it binds directly near the 3'-end of the 23S rRNA, where it nucleates assembly of the 50S subunit. The polypeptide is Large ribosomal subunit protein uL3 (Methylobacterium nodulans (strain LMG 21967 / CNCM I-2342 / ORS 2060)).